Here is a 259-residue protein sequence, read N- to C-terminus: Bacillaene synthase dehydratase PksH (259 aa).

Catalysis depends on residues aspartate 68 and glutamate 137.

The protein belongs to the enoyl-CoA hydratase/isomerase family.

The protein resides in the cytoplasm. Its pathway is antibiotic biosynthesis; bacillaene biosynthesis. In terms of biological role, involved in some intermediate steps for the synthesis of the antibiotic polyketide bacillaene which is involved in secondary metabolism. Catalyzes the dehydration of the (S)-3-hydroxy-3-methylglutaryl group tethered to PksL to a 3-methylglutaconyl moiety. This Bacillus subtilis (strain 168) protein is Bacillaene synthase dehydratase PksH (pksH).